The sequence spans 147 residues: MRTPNYINNNYFNNNNNNNNNNNNNNNNNNNNNNNNNNNNNNNQTNLNEENNDQYDMMRENLKIRNITVILKLLITMKAGITRNSSDTTGMTMTPSDQVPTPGVSKDDFNTLIIRHFRLYNNYPSPSPTTSFNSTNPQNTHQTRKSN.

Disordered stretches follow at residues 1–49 (MRTP…NLNE) and 125–147 (SPSP…RKSN). Low complexity-rich tracts occupy residues 8–49 (NNNY…NLNE) and 125–140 (SPSP…PQNT).

This is an uncharacterized protein from Dictyostelium discoideum (Social amoeba).